A 336-amino-acid polypeptide reads, in one-letter code: Probable GTPase MT1543 (336 aa).

GTP is bound by residues 67 to 75, D209, and 245 to 247; these read GVPGVGKST and SAV.

Belongs to the SIMIBI class G3E GTPase family. ArgK/MeaB subfamily. As to quaternary structure, homodimer.

Its function is as follows. Probable GTPase. May also bind and hydrolyze ATP. May function as chaperone. This chain is Probable GTPase MT1543, found in Mycobacterium tuberculosis (strain CDC 1551 / Oshkosh).